Reading from the N-terminus, the 489-residue chain is MKYKNLREFLDLLEQKGELKRITQEIDPYLEMTEIADRTLSKGGPALLFENPKGYKIPVLCNLFGTPERVAMGMGQEDTKALRELGKLLAFLKEPEPPKGFKDLIGQLPQWKQVLNMPSKVLNKADCQQVVISDDDVDLYQLPIMHCWQGDVAPLVTWGLTITQGPYKKRLNLGIYRQQLIGKNKLIMRWLSHRGGALDFQEWKEANSDKPFPVSVALGADPATILAAVTPIPDTLSEYAFAGLLRGHKTEVVKSISNDLEVPASAEIVLEGYIDLNETALEGPYGDHTGYYNEQEYFPVFTVTHITMRKDAIYHSTYTGRPPDEPAVLGEALNEVFIPILQKQFPEIVDFYLPPEGCSYRLAVVTIKKQYAGHAKRVMMGVWSFLRQFMYTKFVIVCDDDVNARDWKDVIWAITTRCDPARDATLIENTPIDYLDFASPIAGLGSKMGIDATNKWAGETQREWGTPITKNPDVVKRVDEIWESLGIED.

Asn-172 is a binding site for Mn(2+). Residues 175–177 (IYR), 189–191 (RWL), and 194–195 (RG) contribute to the prenylated FMN site. Glu-238 is a Mn(2+) binding site. The active-site Proton donor is Asp-287.

Belongs to the UbiD family. In terms of assembly, homohexamer. Requires prenylated FMN as cofactor. The cofactor is Mn(2+).

It is found in the cell membrane. The enzyme catalyses a 4-hydroxy-3-(all-trans-polyprenyl)benzoate + H(+) = a 2-(all-trans-polyprenyl)phenol + CO2. The protein operates within cofactor biosynthesis; ubiquinone biosynthesis. Its function is as follows. Catalyzes the decarboxylation of 3-octaprenyl-4-hydroxy benzoate to 2-octaprenylphenol, an intermediate step in ubiquinone biosynthesis. The polypeptide is 3-octaprenyl-4-hydroxybenzoate carboxy-lyase (Glaesserella parasuis serovar 5 (strain SH0165) (Haemophilus parasuis)).